The sequence spans 78 residues: Serine rich endogenous peptide 19 (78 aa).

A signal peptide spans 1–25 (MCNIVVFLLTLTLFLFSGLSNTAFA). The SCOOP motif motif lies at 50 to 64 (KIEVDGSCSRRAPGR). Positions 56–58 (SCS) match the SxS motif essential for MIK2 binding motif. The disordered stretch occupies residues 57-78 (CSRRAPGRRRPPNRPPKPCTKP). Pro residues predominate over residues 69–78 (NRPPKPCTKP).

Belongs to the serine rich endogenous peptide (SCOOP) phytocytokine family. Interacts with MIK2 (via extracellular leucine-rich repeat domain); this interaction triggers the formation of complex between MIK2 and the BAK1/SERK3 and SERK4 coreceptors, and subsequent BAK1 activation by phosphorylation.

It localises to the cell membrane. It is found in the secreted. The protein resides in the extracellular space. The protein localises to the apoplast. In terms of biological role, brassicaceae-specific phytocytokine (plant endogenous peptide released into the apoplast) perceived by MIK2 in a BAK1/SERK3 and SERK4 coreceptors-dependent manner, that modulates various physiological and antimicrobial processes including growth prevention and reactive oxygen species (ROS) response regulation. The protein is Serine rich endogenous peptide 19 of Arabidopsis thaliana (Mouse-ear cress).